A 336-amino-acid polypeptide reads, in one-letter code: Holliday junction branch migration complex subunit RuvB (336 aa).

A large ATPase domain (RuvB-L) region spans residues 4–184; the sequence is ADRLVSADSS…FGIVQRLEFY (181 aa). Residues Ile-23, Arg-24, Gly-65, Lys-68, Thr-69, Thr-70, 131–133, Arg-174, Tyr-184, and Arg-221 each bind ATP; that span reads EDY. Position 69 (Thr-69) interacts with Mg(2+). Residues 185–255 form a small ATPAse domain (RuvB-S) region; sequence QIPDLQHIVS…IAAQALDMLN (71 aa). Residues 258–336 are head domain (RuvB-H); it reads AEGFDYMDRK…HFGITPPEMP (79 aa). Residues Arg-294, Arg-313, and Arg-318 each coordinate DNA.

Belongs to the RuvB family. As to quaternary structure, homohexamer. Forms an RuvA(8)-RuvB(12)-Holliday junction (HJ) complex. HJ DNA is sandwiched between 2 RuvA tetramers; dsDNA enters through RuvA and exits via RuvB. An RuvB hexamer assembles on each DNA strand where it exits the tetramer. Each RuvB hexamer is contacted by two RuvA subunits (via domain III) on 2 adjacent RuvB subunits; this complex drives branch migration. In the full resolvosome a probable DNA-RuvA(4)-RuvB(12)-RuvC(2) complex forms which resolves the HJ.

Its subcellular location is the cytoplasm. It catalyses the reaction ATP + H2O = ADP + phosphate + H(+). The RuvA-RuvB-RuvC complex processes Holliday junction (HJ) DNA during genetic recombination and DNA repair, while the RuvA-RuvB complex plays an important role in the rescue of blocked DNA replication forks via replication fork reversal (RFR). RuvA specifically binds to HJ cruciform DNA, conferring on it an open structure. The RuvB hexamer acts as an ATP-dependent pump, pulling dsDNA into and through the RuvAB complex. RuvB forms 2 homohexamers on either side of HJ DNA bound by 1 or 2 RuvA tetramers; 4 subunits per hexamer contact DNA at a time. Coordinated motions by a converter formed by DNA-disengaged RuvB subunits stimulates ATP hydrolysis and nucleotide exchange. Immobilization of the converter enables RuvB to convert the ATP-contained energy into a lever motion, pulling 2 nucleotides of DNA out of the RuvA tetramer per ATP hydrolyzed, thus driving DNA branch migration. The RuvB motors rotate together with the DNA substrate, which together with the progressing nucleotide cycle form the mechanistic basis for DNA recombination by continuous HJ branch migration. Branch migration allows RuvC to scan DNA until it finds its consensus sequence, where it cleaves and resolves cruciform DNA. This Klebsiella pneumoniae (strain 342) protein is Holliday junction branch migration complex subunit RuvB.